Consider the following 564-residue polypeptide: Histone acetyltransferase rtt109 (564 aa).

Acetyl-CoA is bound by residues Phe-138, 157–159 (HVL), and Trp-167. The active-site Proton donor/acceptor is the Asp-261. Residue Lys-263 is modified to N6-acetyllysine; by autocatalysis. Disordered regions lie at residues 355–420 (YDKV…NAFY) and 506–549 (RKKD…ESPG). Low complexity predominate over residues 366–377 (AVSVSTDSQSSD). Composition is skewed to polar residues over residues 394-417 (DPSTQTGSLSSETHPKVQPNTDQN) and 512-521 (SQATTATSAQ). The segment covering 529-544 (GTVSTAVTAEASTTGT) has biased composition (low complexity).

It belongs to the RTT109 family.

The protein resides in the nucleus. It is found in the vacuole. The catalysed reaction is L-lysyl-[protein] + acetyl-CoA = N(6)-acetyl-L-lysyl-[protein] + CoA + H(+). It carries out the reaction L-lysyl-[histone] + acetyl-CoA = N(6)-acetyl-L-lysyl-[histone] + CoA + H(+). Its function is as follows. Histone chaperone-dependent acetylase that modifies 'Lys-56' of histone H3 (H3K56ac). Histone H3 'Lys-56' acetylation may be required for S-phase-linked DNA damage tolerance. Also acetylates 'Lys-9' of histone H3 (H3K9ac). Autoacetylates. The sequence is that of Histone acetyltransferase rtt109 from Aspergillus flavus.